The chain runs to 88 residues: FXYD domain-containing ion transport regulator 3 (88 aa).

A signal peptide spans 1–17 (MHEVALSVLILLAGLSA). Residues 18-38 (LDANDPEDKNSPFYYDWHSLR) are Extracellular-facing. A helical membrane pass occupies residues 39–59 (VGGLICAGTPCALGIIILLSG). At 60–88 (KCKCKFSQKPSHRPGDAPPLITPGSAHDC) the chain is on the cytoplasmic side. Residues 66–88 (SQKPSHRPGDAPPLITPGSAHDC) form a disordered region.

Belongs to the FXYD family. Regulatory subunit of the sodium/potassium-transporting ATPase which is composed of a catalytic alpha subunit, a non-catalytic beta subunit and an additional regulatory subunit. Interacts with catalytic alpha subunit ATP1A1. Also interacts with non-catalytic beta subunit ATP1B1. Interacts with the alpha1-beta1, alpha2-beta1 and alpha3-beta1 NKA isozymes. In terms of processing, glutathionylated.

The protein resides in the cell membrane. Its function is as follows. Associates with and regulates the activity of the sodium/potassium-transporting ATPase (NKA) which transports Na(+) out of the cell and K(+) into the cell. Reduces glutathionylation of the NKA beta-1 subunit ATP1B1, thus reversing glutathionylation-mediated inhibition of ATP1B1. Induces a hyperpolarization-activated chloride current when expressed in Xenopus oocytes. The sequence is that of FXYD domain-containing ion transport regulator 3 (FXYD3) from Sus scrofa (Pig).